The chain runs to 240 residues: Sugar fermentation stimulation protein homolog (240 aa).

It belongs to the SfsA family.

The polypeptide is Sugar fermentation stimulation protein homolog (Crocosphaera subtropica (strain ATCC 51142 / BH68) (Cyanothece sp. (strain ATCC 51142))).